The chain runs to 271 residues: Large ribosomal subunit protein uL2cz/uL2cy (271 aa).

Disordered regions lie at residues 1–22 (MAKH…DRQV) and 223–271 (PVDH…RRRK).

Belongs to the universal ribosomal protein uL2 family. In terms of assembly, part of the 50S ribosomal subunit.

The protein resides in the plastid. It is found in the chloroplast. The chain is Large ribosomal subunit protein uL2cz/uL2cy (rpl2-A) from Sorghum bicolor (Sorghum).